Here is a 292-residue protein sequence, read N- to C-terminus: E3 ubiquitin-protein ligase RNF144A (292 aa).

The tract at residues 16-236 (PLVSCKLCLG…YDKGPCRNKL (221 aa)) is TRIAD supradomain. 14 residues coordinate Zn(2+): C20, C23, C43, C46, C111, C116, C135, C138, C143, C146, H151, C156, C185, and C188. An RING-type 1 zinc finger spans residues 20 to 70 (CKLCLGEYPVEQMTTIAQCQCIFCTLCLKQYVELLIKEGLETAISCPDAAC). The segment at 91 to 156 (QRYKKLQFER…KASWHPGQGC (66 aa)) adopts an IBR-type zinc-finger fold. The RING-type 2; atypical zinc-finger motif lies at 185 to 214 (CPKCKVYIERDEGCAQMMCKNCKHAFCWYC). Residue C198 is part of the active site. Zn(2+)-binding residues include C203, C206, C211, C214, H226, and C232. The helical transmembrane segment at 250 to 270 (VVGIFAGFGLLLLVASPFLLL) threads the bilayer.

The protein belongs to the RBR family. RNF144 subfamily. In terms of assembly, self-associates. Interacts with UBE2L3. In terms of processing, auto-ubiquitinated.

Its subcellular location is the cell membrane. It localises to the cytoplasmic vesicle membrane. It is found in the endosome membrane. The protein resides in the endoplasmic reticulum membrane. The enzyme catalyses [E2 ubiquitin-conjugating enzyme]-S-ubiquitinyl-L-cysteine + [acceptor protein]-L-lysine = [E2 ubiquitin-conjugating enzyme]-L-cysteine + [acceptor protein]-N(6)-ubiquitinyl-L-lysine.. It participates in protein modification; protein ubiquitination. In terms of biological role, E3 ubiquitin-protein ligase which accepts ubiquitin from E2 ubiquitin-conjugating enzymes UBE2L3 and UBE2L6 in the form of a thioester and then directly transfers the ubiquitin to targeted substrates. Mediates the ubiquitination and degradation of the DNA damage kinase PRKDC during DNA damage. Positively regulates DNA virus or exogenous cytosolic DNA-triggered innate immune response by mediating STING1 ubiquitination and increasing its 'Lys-6'-linked ubiquitination and translocation from the endoplasmic reticulum to the Golgi leading to downstream signaling pathways. Plays a positive role in EGF-dependent cell proliferation by prolonging EGF/EGFR signaling during EGF stimulation through EGFR ubiquitination. Increases ERK activity independently of EGFR signaling by promoting polyubiquitination and subsequent degradation of VRK3 in the cytosol. The polypeptide is E3 ubiquitin-protein ligase RNF144A (RNF144A) (Homo sapiens (Human)).